Consider the following 588-residue polypeptide: Glutathione/L-cysteine transport system ATP-binding/permease protein CydD (588 aa).

Over 1–15 (MNKSRQKELTRWLKQ) the chain is Cytoplasmic. 2 helical membrane passes run 16–36 (QSVISQRWLNISRLLGFVSGI) and 37–57 (LIIAQAWFMARILQHMIMENI). The ABC transmembrane type-1 domain maps to 20–306 (SQRWLNISRL…APEFFQPLRD (287 aa)). The Cytoplasmic segment spans residues 58-136 (PREALLLPFT…LEQIDDMHDY (79 aa)). A helical membrane pass occupies residues 137–157 (YARYLPQMALAVSVPLLIVVA). At 158 to 161 (IFPS) the chain is on the periplasmic side. The helical transmembrane segment at 162-182 (NWAAALILLGTAPLIPLFMAL) threads the bilayer. Residues 183–249 (VGMGAADANR…MEVLRLAFLS (67 aa)) are Cytoplasmic-facing. Residues 250–270 (SGILEFFTSLSIALVAVYFGF) traverse the membrane as a helical segment. Topologically, residues 271–276 (SYLGEL) are periplasmic. A helical transmembrane segment spans residues 277 to 297 (DFGHYDTGVTLAAGFLALILA). The Cytoplasmic portion of the chain corresponds to 298–573 (PEFFQPLRDL…QGRYAELSVA (276 aa)). An ABC transporter domain is found at 339–572 (EAELASTDPV…EQGRYAELSV (234 aa)). 373–380 (LPAGQRAV) lines the ATP pocket.

This sequence belongs to the ABC transporter superfamily. Cysteine exporter (TC 3.A.1.129.1) family. Forms a heterodimer with CydC.

The protein localises to the cell inner membrane. It carries out the reaction L-cysteine(in) + ATP + H2O = L-cysteine(out) + ADP + phosphate + H(+). The catalysed reaction is glutathione(in) + ATP + H2O = glutathione(out) + ADP + phosphate + H(+). Its activity is regulated as follows. ATPase activity is stimulated by various thiol compounds. The presence of heme leads to a further enhancement of thiol-stimulated ATPase activity, although a large excess of heme inhibits activity. Glutathione transport is inhibited by sodium orthovanadate, an inhibitor of ABC-type transport systems, but not by the proton ionophore carbonyl cyanide m-chlorophenylhydrazone (CCCP). In terms of biological role, part of the ABC transporter complex CydDC that exports the reduced low-molecular-weight thiols cysteine and glutathione to the periplasm. Export of these thiol-containing redox-active molecules may be crucial for redox homeostasis in the periplasm, permitting correct assembly of various respiratory complexes and formation of correct disulfide bonds in periplasmic and secreted proteins. CydD contains transmembrane domains (TMD), which form a pore in the inner membrane, and an ATP-binding domain (NBD), which is responsible for energy generation. Required for the assembly of functional cytochrome bd-type quinol oxidases and periplasmic c-type cytochromes. Overexpression of CydDC under anaerobic conditions also results in the formation of a heme biosynthesis-derived pigment, P-574. CydDC binds heme b, but heme is probably not transported by the complex and instead has a role in regulating ATPase activity. Conversely, a more recent study suggests an alternative function of CydDC: authors suggest that CydDC does not mediate the export of L-cysteine but rather reduces cytoplasmic L-cystine to L-cysteine. The principle function of CydDC would be to maintain the reduced state of cytoplasmic L-cysteine, thereby providing an important connection between sulfur metabolism, oxidative stress and resistance to antibiotics. In Escherichia coli (strain K12), this protein is Glutathione/L-cysteine transport system ATP-binding/permease protein CydD.